The sequence spans 441 residues: Methylenetetrahydrofolate--tRNA-(uracil-5-)-methyltransferase TrmFO (441 aa).

11–16 (GAGLAG) provides a ligand contact to FAD.

Belongs to the MnmG family. TrmFO subfamily. FAD is required as a cofactor.

It is found in the cytoplasm. It catalyses the reaction uridine(54) in tRNA + (6R)-5,10-methylene-5,6,7,8-tetrahydrofolate + NADH + H(+) = 5-methyluridine(54) in tRNA + (6S)-5,6,7,8-tetrahydrofolate + NAD(+). The catalysed reaction is uridine(54) in tRNA + (6R)-5,10-methylene-5,6,7,8-tetrahydrofolate + NADPH + H(+) = 5-methyluridine(54) in tRNA + (6S)-5,6,7,8-tetrahydrofolate + NADP(+). In terms of biological role, catalyzes the folate-dependent formation of 5-methyl-uridine at position 54 (M-5-U54) in all tRNAs. The chain is Methylenetetrahydrofolate--tRNA-(uracil-5-)-methyltransferase TrmFO from Lactiplantibacillus plantarum (strain ATCC BAA-793 / NCIMB 8826 / WCFS1) (Lactobacillus plantarum).